Reading from the N-terminus, the 1366-residue chain is MKTVILLHLFFYCTIAMAKTISGVFTSFNSLTYTNTGNYPYGGPGYPTWTAVLGWSLDGTLASPGDTFTLVMPCVFKFITTQTSVDLTANGVKYATCTFHAGEDFTTFSSMSCVVNNGLSSNIRAFGTVRLPISFNVGGTGSSVNIQDSKCFTAGTNTVTFTDGDHKISTTVNFPKTPQSSSSLVYFARVIPSLDKLSSLVVASQCTAGYASGVLGFSATKDDVTIDCSTIHVGITNGLNSWNMPVSSESFSYTKTCTPNSFIITYENVPAGYRPFIDSYVKKSATATNGFNLNYTNIYNCMDGKKGNDPLIYFWTSYTNSDAGSNGAAVVVTTRTVTDSTTAITTLPFDPTVDKTKTIEVIEPIPTTTITTSYVGISTSLSTKTATIGGTATVVVDVPYHTTTTITSIWTGSATTSSTYTNPTDSIDTVVVQVPSPNPTVTTTQFWSGSVPTTETVTTGPQGTDSVIIKEPHNPTVTTTEFWSESFATTETVTNGPEGTDSVIVREPHNPTVTTTEFWSESFATTETVTNGPEGTDSVIVREPHNPTVTTTEFWSESFATTETITTGPLGTDSIVIHDPLEESSSSTAIESSDSNISSSAQESSSSVEQSLTSADETSSIVELSSSSDIPSSSIGLTSSESSTVSSYDSYSSSTSESSIASSYDSYWSSSIESSTLSSSDRYSSSISDTTSFWDSSSSDLESTSITWSSSIDAQSSHLVQSVSNSISTSQELSSSSSEESSTSATDALVSSDASSILSSDTSSYYPSSTISPSDDFPHTIAGESDSQSISFITSTVEISSDSVSLTSDPASSFDSSSSLNSDSSSSPSSDQSDILTSSSFSTLVVPSFSLSSSSSLSLTYPHYVNSTTYHASESESSSVASPSMASESANDDTHTLSESTDTTSSIGTDSSTVTFCRRDNGDGCIVTGMPSSSIDSEQTSDVTTTSSFVASSTPTSAEQSITDNPNIDSSQTSASSSTKLSVFVSDTVVNSISLSETSTLSSDDSTSSDTSISSTTNSDTGNINAGSSHTSTASIKESSIQKTGVMLSSSYLSTKLSSTSDITTELITTELTTTELTTIEDNEPNTFTSTPSSHSEIFSSDNSVLSKQVDGESTVEIPPVTDTTTVSSVSVHSIEASTATLGENSFSKVASAPVNTETSLRSTSSSSNHATESSGTVKSEASAEAIPSPPTSTDNRLSYSTEEAKGSTYANSGSTNNLMTESQVAAPTDSTSVLTANPVVTSTFDDKSSAAVNQPSKTKSIEESIGSLDSVNETNNGFIATLSQSEAPNSLIHSESISTTMAKTTDASINGDSAASNSQPTTLIQQVATSSYNQPLITTYAGSSSATKHPSWLLKFISVALFFFL.

Residues 1 to 18 form the signal peptide; sequence MKTVILLHLFFYCTIAMA. 4 disulfide bridges follow: C74–C151, C97–C113, C206–C301, and C228–C257. The N-linked (GlcNAc...) asparagine glycan is linked to N294. 6 ALS repeats span residues 368–399, 404–435, 441–472, 477–508, 513–544, and 549–580; these read TTIT…VDVP, TTIT…VQVP, VTTT…IKEP, VTTT…VREP, and VTTT…IHDP. The segment at 449-470 is disordered; that stretch reads GSVPTTETVTTGPQGTDSVIIK. Residues 451–464 show a composition bias toward low complexity; sequence VPTTETVTTGPQGT. Disordered regions lie at residues 583–658, 758–780, and 804–833; these read ESSS…TSES, LSSD…FPHT, and VSLT…SDQS. Residue N596 is glycosylated (N-linked (GlcNAc...) asparagine). 2 stretches are compositionally biased toward low complexity: residues 758 to 775 and 805 to 833; these read LSSD…SPSD and SLTS…SDQS. The N-linked (GlcNAc...) asparagine glycan is linked to N866. 5 disordered regions span residues 874 to 915, 928 to 976, 996 to 1040, 1081 to 1130, and 1158 to 1218; these read ESES…STVT, TGMP…TSAS, SETS…KESS, EDNE…VSSV, and ETSL…STNN. Composition is skewed to low complexity over residues 875-889, 898-915, and 940-958; these read SESS…ASES, SEST…STVT, and TSDV…PTSA. Polar residues predominate over residues 959-969; sequence EQSITDNPNID. Over residues 996-1021 the composition is skewed to low complexity; that stretch reads SETSTLSSDDSTSSDTSISSTTNSDT. Polar residues-rich tracts occupy residues 1022-1040 and 1085-1107; these read GNIN…KESS and PNTF…SVLS. Low complexity-rich tracts occupy residues 1121–1130 and 1158–1177; these read VTDTTTVSSV and ETSL…SSGT. Composition is skewed to polar residues over residues 1192–1202 and 1209–1218; these read TSTDNRLSYST and TYANSGSTNN. N-linked (GlcNAc...) asparagine glycosylation is present at N1273. Residue S1345 is the site of GPI-anchor amidated serine attachment. Positions 1346–1366 are cleaved as a propeptide — removed in mature form; the sequence is SATKHPSWLLKFISVALFFFL.

The protein belongs to the ALS family. In terms of processing, the GPI-anchor is attached to the protein in the endoplasmic reticulum and serves to target the protein to the cell surface. There, the glucosamine-inositol phospholipid moiety is cleaved off and the GPI-modified mannoprotein is covalently attached via its lipidless GPI glycan remnant to the 1,6-beta-glucan of the outer cell wall layer.

It is found in the cell membrane. The protein resides in the secreted. It localises to the cell wall. In terms of biological role, cell surface adhesion protein which mediates both yeast-to-host tissue adherence and yeast aggregation. Plays an important role in the pathogenesis of C.albicans infections. This is Agglutinin-like protein 6 (ALS6) from Candida albicans (strain SC5314 / ATCC MYA-2876) (Yeast).